A 276-amino-acid polypeptide reads, in one-letter code: Protein HemX (276 aa).

Transmembrane regions (helical) follow at residues 9–29 (LNEGTIVIYALSVLFYFIDFL), 40–60 (FWLLSIVWTLQTVYLAYFMWV), 66–86 (VLNVTEALYFYAWVLVTLSLV), 93–113 (VDFIVFFTNVIGFSMIAIHTF), 132–152 (LVIHITMAILSYGAFSLSFVF), 187–207 (VLNVIGVPMLLLSLILGVIWA), 217–237 (FDAKVLGSFVVLLLYSYYLYI), and 247–267 (VAALWNTACFLVLMINYFLLG).

The protein to M.leprae U1620K.

The protein resides in the cell membrane. Required for HemL synthesis. This Bacillus subtilis (strain 168) protein is Protein HemX (hemX).